The chain runs to 571 residues: Proline--tRNA ligase (571 aa).

The protein belongs to the class-II aminoacyl-tRNA synthetase family. ProS type 1 subfamily. As to quaternary structure, homodimer.

Its subcellular location is the cytoplasm. The catalysed reaction is tRNA(Pro) + L-proline + ATP = L-prolyl-tRNA(Pro) + AMP + diphosphate. In terms of biological role, catalyzes the attachment of proline to tRNA(Pro) in a two-step reaction: proline is first activated by ATP to form Pro-AMP and then transferred to the acceptor end of tRNA(Pro). As ProRS can inadvertently accommodate and process non-cognate amino acids such as alanine and cysteine, to avoid such errors it has two additional distinct editing activities against alanine. One activity is designated as 'pretransfer' editing and involves the tRNA(Pro)-independent hydrolysis of activated Ala-AMP. The other activity is designated 'posttransfer' editing and involves deacylation of mischarged Ala-tRNA(Pro). The misacylated Cys-tRNA(Pro) is not edited by ProRS. The polypeptide is Proline--tRNA ligase (Actinobacillus succinogenes (strain ATCC 55618 / DSM 22257 / CCUG 43843 / 130Z)).